The sequence spans 157 residues: Small ribosomal subunit protein uS7cz/uS7cy (157 aa).

This sequence belongs to the universal ribosomal protein uS7 family. In terms of assembly, part of the 30S ribosomal subunit.

The protein localises to the plastid. The protein resides in the chloroplast. In terms of biological role, one of the primary rRNA binding proteins, it binds directly to 16S rRNA where it nucleates assembly of the head domain of the 30S subunit. The polypeptide is Small ribosomal subunit protein uS7cz/uS7cy (rps7-A) (Gnetum parvifolium (Small-leaved jointfir)).